The following is a 95-amino-acid chain: Aspartyl/glutamyl-tRNA(Asn/Gln) amidotransferase subunit C (95 aa).

It belongs to the GatC family. Heterotrimer of A, B and C subunits.

It catalyses the reaction L-glutamyl-tRNA(Gln) + L-glutamine + ATP + H2O = L-glutaminyl-tRNA(Gln) + L-glutamate + ADP + phosphate + H(+). The enzyme catalyses L-aspartyl-tRNA(Asn) + L-glutamine + ATP + H2O = L-asparaginyl-tRNA(Asn) + L-glutamate + ADP + phosphate + 2 H(+). Allows the formation of correctly charged Asn-tRNA(Asn) or Gln-tRNA(Gln) through the transamidation of misacylated Asp-tRNA(Asn) or Glu-tRNA(Gln) in organisms which lack either or both of asparaginyl-tRNA or glutaminyl-tRNA synthetases. The reaction takes place in the presence of glutamine and ATP through an activated phospho-Asp-tRNA(Asn) or phospho-Glu-tRNA(Gln). In Geotalea uraniireducens (strain Rf4) (Geobacter uraniireducens), this protein is Aspartyl/glutamyl-tRNA(Asn/Gln) amidotransferase subunit C.